The chain runs to 196 residues: Pyridoxal 5'-phosphate synthase subunit PdxT (196 aa).

46–48 contacts L-glutamine; it reads GES. Cys78 serves as the catalytic Nucleophile. Residues Arg110 and 138-139 contribute to the L-glutamine site; that span reads IR. Residues His174 and Glu176 each act as charge relay system in the active site.

This sequence belongs to the glutaminase PdxT/SNO family. In the presence of PdxS, forms a dodecamer of heterodimers. Only shows activity in the heterodimer.

It catalyses the reaction aldehydo-D-ribose 5-phosphate + D-glyceraldehyde 3-phosphate + L-glutamine = pyridoxal 5'-phosphate + L-glutamate + phosphate + 3 H2O + H(+). The catalysed reaction is L-glutamine + H2O = L-glutamate + NH4(+). Its pathway is cofactor biosynthesis; pyridoxal 5'-phosphate biosynthesis. Catalyzes the hydrolysis of glutamine to glutamate and ammonia as part of the biosynthesis of pyridoxal 5'-phosphate. The resulting ammonia molecule is channeled to the active site of PdxS. The polypeptide is Pyridoxal 5'-phosphate synthase subunit PdxT (Deinococcus radiodurans (strain ATCC 13939 / DSM 20539 / JCM 16871 / CCUG 27074 / LMG 4051 / NBRC 15346 / NCIMB 9279 / VKM B-1422 / R1)).